The chain runs to 338 residues: Phenylalanine--tRNA ligase alpha subunit (338 aa).

Glutamate 253 lines the Mg(2+) pocket.

Belongs to the class-II aminoacyl-tRNA synthetase family. Phe-tRNA synthetase alpha subunit type 1 subfamily. Tetramer of two alpha and two beta subunits. The cofactor is Mg(2+).

The protein localises to the cytoplasm. The enzyme catalyses tRNA(Phe) + L-phenylalanine + ATP = L-phenylalanyl-tRNA(Phe) + AMP + diphosphate + H(+). The polypeptide is Phenylalanine--tRNA ligase alpha subunit (Geotalea daltonii (strain DSM 22248 / JCM 15807 / FRC-32) (Geobacter daltonii)).